Reading from the N-terminus, the 113-residue chain is Mitochondrial import inner membrane translocase subunit PAM16 like 1 (113 aa).

The N-terminal 48 residues, M1–G48, are a transit peptide targeting the mitochondrion. The tract at residues E55 to A104 is J-like.

The protein belongs to the TIM16/PAM16 family. Expressed at low levels in seedlings, rosettes and inflorescence.

The protein localises to the mitochondrion inner membrane. Functionally, regulates ATP-dependent protein translocation into the mitochondrial matrix. The sequence is that of Mitochondrial import inner membrane translocase subunit PAM16 like 1 from Arabidopsis thaliana (Mouse-ear cress).